A 1166-amino-acid chain; its full sequence is DEAD-box ATP-dependent RNA helicase 42 (1166 aa).

Composition is skewed to basic and acidic residues over residues 1-12 (MEVEKSKYRSED) and 21-45 (DLKKSRRDRDRSNERKKDKGSEKRR). The tract at residues 1–460 (MEVEKSKYRS…NDDDPSLDED (460 aa)) is disordered. A coiled-coil region spans residues 14–95 (DVVEEEADLK…KDRVKRRSER (82 aa)). A compositionally biased stretch (acidic residues) spans 59-70 (SEDDYDRDDDEE). The segment covering 80–95 (ERRRRDKDRVKRRSER) has biased composition (basic residues). Positions 101–110 (SEDDVEEEDE) are enriched in acidic residues. A compositionally biased stretch (basic and acidic residues) spans 111–206 (RDKRRVNEKE…RERERSREVG (96 aa)). Residues 130–302 (RGKDRKRDRE…KRKKEEAESE (173 aa)) are a coiled coil. Serine 210 carries the post-translational modification Phosphoserine. A compositionally biased stretch (basic and acidic residues) spans 224 to 314 (EGGERKEKER…GDADGNEPKA (91 aa)). Serine 324 bears the Phosphoserine mark. Basic and acidic residues-rich tracts occupy residues 344-357 (ETKPENDGDAKMVD) and 416-426 (MNGKESGDRPK). Residues 529–557 (KFWHQTGLTSKILDTMKKLNYEKPMPIQT) carry the Q motif motif. The Helicase ATP-binding domain maps to 560–738 (LPIIMSGRDC…RKVLNKPVEI (179 aa)). 573 to 580 (AKTGSGKT) provides a ligand contact to ATP. Positions 686–689 (DEAD) match the DEAD box motif. The 162-residue stretch at 749–910 (DITQLVEVRP…PVPDDLKALA (162 aa)) folds into the Helicase C-terminal domain.

It belongs to the DEAD box helicase family. DDX46/PRP5 subfamily.

The protein resides in the nucleus. It carries out the reaction ATP + H2O = ADP + phosphate + H(+). Its function is as follows. Helicase required for pre-mRNA splicing, cold-responsive gene regulation and cold tolerance. The sequence is that of DEAD-box ATP-dependent RNA helicase 42 (RH42) from Arabidopsis thaliana (Mouse-ear cress).